The following is a 494-amino-acid chain: Guanosine-5'-triphosphate,3'-diphosphate pyrophosphatase (494 aa).

It belongs to the GppA/Ppx family. GppA subfamily.

It catalyses the reaction guanosine 3'-diphosphate 5'-triphosphate + H2O = guanosine 3',5'-bis(diphosphate) + phosphate + H(+). The protein operates within purine metabolism; ppGpp biosynthesis; ppGpp from GTP: step 2/2. Its function is as follows. Catalyzes the conversion of pppGpp to ppGpp. Guanosine pentaphosphate (pppGpp) is a cytoplasmic signaling molecule which together with ppGpp controls the 'stringent response', an adaptive process that allows bacteria to respond to amino acid starvation, resulting in the coordinated regulation of numerous cellular activities. This Shigella sonnei (strain Ss046) protein is Guanosine-5'-triphosphate,3'-diphosphate pyrophosphatase.